The sequence spans 555 residues: Glycerol dehydratase large subunit (555 aa).

Belongs to the diol/glycerol dehydratase large subunit family. Probably consists of three subunits: large, medium, and small. Requires adenosylcob(III)alamin as cofactor.

It catalyses the reaction glycerol = 3-hydroxypropanal + H2O. The polypeptide is Glycerol dehydratase large subunit (dhaB) (Citrobacter freundii).